A 153-amino-acid polypeptide reads, in one-letter code: 3-hydroxyacyl-[acyl-carrier-protein] dehydratase FabZ (153 aa).

H56 is a catalytic residue.

The protein belongs to the thioester dehydratase family. FabZ subfamily.

It is found in the cytoplasm. The enzyme catalyses a (3R)-hydroxyacyl-[ACP] = a (2E)-enoyl-[ACP] + H2O. Its function is as follows. Involved in unsaturated fatty acids biosynthesis. Catalyzes the dehydration of short chain beta-hydroxyacyl-ACPs and long chain saturated and unsaturated beta-hydroxyacyl-ACPs. The chain is 3-hydroxyacyl-[acyl-carrier-protein] dehydratase FabZ from Halorhodospira halophila (strain DSM 244 / SL1) (Ectothiorhodospira halophila (strain DSM 244 / SL1)).